We begin with the raw amino-acid sequence, 412 residues long: Shaggy-related protein kinase zeta (412 aa).

Positions Met1 to Pro19 are enriched in pro residues. Residues Met1 to Ile33 form a disordered region. Residues His22–Ile33 show a composition bias toward basic and acidic residues. Ser26 carries the phosphoserine modification. The Protein kinase domain occupies Tyr72–Phe356. ATP is bound by residues Val78 to Val86 and Lys101. Ser127 is subject to Phosphoserine. Residues Thr136 and Thr137 each carry the phosphothreonine modification. Residue Asp197 is the Proton acceptor of the active site. Ser219 carries the post-translational modification Phosphoserine. Phosphotyrosine is present on Tyr232. A Phosphoserine modification is found at Ser252. The residue at position 293 (Thr293) is a Phosphothreonine. Ser342 is modified (phosphoserine). At Thr346 the chain carries Phosphothreonine.

Belongs to the protein kinase superfamily. CMGC Ser/Thr protein kinase family. GSK-3 subfamily. Binds to KIB1. Interacts with beet curly top virus AL4/C4 and tomato golden mosaic virus AL4/AC4. In terms of processing, autophosphorylated mainly on threonine and serine residues.

It carries out the reaction L-seryl-[protein] + ATP = O-phospho-L-seryl-[protein] + ADP + H(+). The catalysed reaction is L-threonyl-[protein] + ATP = O-phospho-L-threonyl-[protein] + ADP + H(+). Its function is as follows. May mediate extracellular signals to regulate transcription in differentiating cells. The chain is Shaggy-related protein kinase zeta (ASK6) from Arabidopsis thaliana (Mouse-ear cress).